The sequence spans 122 residues: Large ribosomal subunit protein uL14 (122 aa).

The protein belongs to the universal ribosomal protein uL14 family. In terms of assembly, part of the 50S ribosomal subunit. Forms a cluster with proteins L3 and L19. In the 70S ribosome, L14 and L19 interact and together make contacts with the 16S rRNA in bridges B5 and B8.

Its function is as follows. Binds to 23S rRNA. Forms part of two intersubunit bridges in the 70S ribosome. In Caulobacter vibrioides (strain ATCC 19089 / CIP 103742 / CB 15) (Caulobacter crescentus), this protein is Large ribosomal subunit protein uL14.